The following is a 250-amino-acid chain: ANVSFSLSGADSKSYSKFITALRKALPSKEKVSNIPLLLPSASGASRYILMQLSNYDAKAITMAIDVTNVYIMGYLVNSTSYFANESDAKLASQYVFKGSTLVTIPYSGNYERLQNAAGKIREKIPLGFRALDSALTSIFHYDSTAAAAAFLVILQTTAEASRFKYIEGQIIERIPKNEVPSPAALSLENEAWSLLSKQIQLAQTNNGAFRTPVVIIDNKGQRVEITNLASKVQIKDVNSKLLLNKQNIA.

The active site involves E160.

The protein belongs to the ribosome-inactivating protein family. Type 1 RIP subfamily.

It catalyses the reaction Endohydrolysis of the N-glycosidic bond at one specific adenosine on the 28S rRNA.. In Luffa aegyptiaca (Sponge gourd), this protein is Ribosome-inactivating protein luffin-B.